Consider the following 409-residue polypeptide: tRNA-specific 2-thiouridylase MnmA (409 aa).

ATP is bound by residues 43 to 50 (AMSGGVDS) and Leu69. Cys137 (nucleophile) is an active-site residue. Cysteines 137 and 235 form a disulfide. Gly161 provides a ligand contact to ATP. The interaction with tRNA stretch occupies residues 185–187 (KDQ). The active-site Cysteine persulfide intermediate is the Cys235.

It belongs to the MnmA/TRMU family.

The protein resides in the cytoplasm. The catalysed reaction is S-sulfanyl-L-cysteinyl-[protein] + uridine(34) in tRNA + AH2 + ATP = 2-thiouridine(34) in tRNA + L-cysteinyl-[protein] + A + AMP + diphosphate + H(+). Its function is as follows. Catalyzes the 2-thiolation of uridine at the wobble position (U34) of tRNA, leading to the formation of s(2)U34. The sequence is that of tRNA-specific 2-thiouridylase MnmA from Caulobacter sp. (strain K31).